The sequence spans 940 residues: Beta-mannosidase A (940 aa).

A signal peptide spans 1-21 (MHFHGIATQAVLASNITTGSG). 7 N-linked (GlcNAc...) asparagine glycosylation sites follow: N15, N39, N79, N245, N314, N321, and N344. The Proton donor role is filled by E476. N-linked (GlcNAc...) asparagine glycans are attached at residues N534, N605, N626, N653, N733, N761, and N785.

It belongs to the glycosyl hydrolase 2 family. Beta-mannosidase A subfamily. Homodimer.

It localises to the secreted. It catalyses the reaction Hydrolysis of terminal, non-reducing beta-D-mannose residues in beta-D-mannosides.. Its pathway is glycan metabolism; N-glycan degradation. In terms of biological role, exoglycosidase that cleaves the single beta-linked mannose residue from the non-reducing end of beta-mannosidic oligosaccharides of various complexity and length. Involved in the degradation of polymeric mannan and galactomannan. This is Beta-mannosidase A (mndA) from Emericella nidulans (strain FGSC A4 / ATCC 38163 / CBS 112.46 / NRRL 194 / M139) (Aspergillus nidulans).